Here is a 134-residue protein sequence, read N- to C-terminus: Profilin-2 (134 aa).

A disulfide bridge links cysteine 13 with cysteine 118. Residues 84–100 carry the Involved in PIP2 interaction motif; sequence AVIRGKKGSGGITIKKT. Threonine 114 carries the phosphothreonine modification.

The protein belongs to the profilin family. In terms of assembly, occurs in many kinds of cells as a complex with monomeric actin in a 1:1 ratio. Post-translationally, phosphorylated by MAP kinases.

It localises to the cytoplasm. The protein resides in the cytoskeleton. Binds to actin and affects the structure of the cytoskeleton. At high concentrations, profilin prevents the polymerization of actin, whereas it enhances it at low concentrations. By binding to PIP2, it inhibits the formation of IP3 and DG. This chain is Profilin-2 (PRO2), found in Olea europaea (Common olive).